Reading from the N-terminus, the 317-residue chain is Large ribosomal subunit protein uL10 (317 aa).

Positions 280-290 are enriched in low complexity; it reads SASAAPAAGGA. The tract at residues 280-317 is disordered; that stretch reads SASAAPAAGGATEKKEEAKKPESESEEEDDDMGFGLFD. Residues 291-302 are compositionally biased toward basic and acidic residues; it reads TEKKEEAKKPES. S302 is modified (phosphoserine). Residue S304 is modified to Phosphoserine; by CK1.

The protein belongs to the universal ribosomal protein uL10 family. As to quaternary structure, P0 forms a pentameric complex by interaction with dimers of P1 and P2.

The protein localises to the cytoplasm. Its subcellular location is the nucleus. Ribosomal protein P0 is the functional equivalent of E.coli protein L10. In Drosophila melanogaster (Fruit fly), this protein is Large ribosomal subunit protein uL10 (RpLP0).